We begin with the raw amino-acid sequence, 386 residues long: ADP,ATP carrier protein, mitochondrial (386 aa).

Residues Ala-1–Ala-76 constitute a mitochondrion transit peptide. Solcar repeat units follow at residues Ala-83–Leu-176, Lys-188–Val-281, and Asp-289–Ile-375. 5 helical membrane-spanning segments follow: residues Phe-85–Leu-112, Thr-153–Phe-177, Tyr-186–Leu-206, Phe-257–Leu-278, and Phe-292–Ile-312. Arg-158 and Lys-170 together coordinate ADP. Residue Arg-316 coordinates ADP. The important for transport activity stretch occupies residues Arg-316–Met-321. Residues Arg-316–Met-321 carry the Nucleotide carrier signature motif motif. The helical transmembrane segment at Ala-352–Leu-372 threads the bilayer.

It belongs to the mitochondrial carrier (TC 2.A.29) family. In terms of assembly, monomer.

It localises to the mitochondrion inner membrane. The enzyme catalyses ADP(in) + ATP(out) = ADP(out) + ATP(in). With respect to regulation, the matrix-open state (m-state) is inhibited by the membrane-permeable bongkrekic acid (BKA). The cytoplasmic-open state (c-state) is inhibited by the membrane-impermeable toxic inhibitor carboxyatractyloside (CATR). Its function is as follows. ADP:ATP antiporter that mediates import of ADP into the mitochondrial matrix for ATP synthesis, and export of ATP out to fuel the cell. Cycles between the cytoplasmic-open state (c-state) and the matrix-open state (m-state): operates by the alternating access mechanism with a single substrate-binding site intermittently exposed to either the cytosolic (c-state) or matrix (m-state) side of the inner mitochondrial membrane. This Solanum tuberosum (Potato) protein is ADP,ATP carrier protein, mitochondrial (ANT1).